A 156-amino-acid chain; its full sequence is Small ribosomal subunit protein uS7c (156 aa).

Belongs to the universal ribosomal protein uS7 family. Part of the 30S ribosomal subunit.

The protein resides in the plastid. The protein localises to the chloroplast. Its function is as follows. One of the primary rRNA binding proteins, it binds directly to 16S rRNA where it nucleates assembly of the head domain of the 30S subunit. In Cycas revoluta (Sago palm), this protein is Small ribosomal subunit protein uS7c (rps7).